A 129-amino-acid polypeptide reads, in one-letter code: UPF0102 protein RD1_1191 (129 aa).

This sequence belongs to the UPF0102 family.

In Roseobacter denitrificans (strain ATCC 33942 / OCh 114) (Erythrobacter sp. (strain OCh 114)), this protein is UPF0102 protein RD1_1191.